The primary structure comprises 64 residues: Large ribosomal subunit protein uL30 (64 aa).

This sequence belongs to the universal ribosomal protein uL30 family. Part of the 50S ribosomal subunit.

This chain is Large ribosomal subunit protein uL30, found in Methylorubrum extorquens (strain CM4 / NCIMB 13688) (Methylobacterium extorquens).